The primary structure comprises 159 residues: NADH-quinone oxidoreductase subunit B (159 aa).

C36, C37, C102, and C132 together coordinate [4Fe-4S] cluster.

This sequence belongs to the complex I 20 kDa subunit family. As to quaternary structure, NDH-1 is composed of 14 different subunits. Subunits NuoB, C, D, E, F, and G constitute the peripheral sector of the complex. The cofactor is [4Fe-4S] cluster.

It localises to the cell inner membrane. It catalyses the reaction a quinone + NADH + 5 H(+)(in) = a quinol + NAD(+) + 4 H(+)(out). Functionally, NDH-1 shuttles electrons from NADH, via FMN and iron-sulfur (Fe-S) centers, to quinones in the respiratory chain. Couples the redox reaction to proton translocation (for every two electrons transferred, four hydrogen ions are translocated across the cytoplasmic membrane), and thus conserves the redox energy in a proton gradient. This chain is NADH-quinone oxidoreductase subunit B, found in Albidiferax ferrireducens (strain ATCC BAA-621 / DSM 15236 / T118) (Rhodoferax ferrireducens).